A 271-amino-acid polypeptide reads, in one-letter code: MIIDVKPLYEDIKVNLLKRIEKLKRTPKLVAVTFKPDPSTVSYLKSQEKAAKRFGLDYEIFEGNSPKGVLKILAELSRDNNVNGIFVTHPLSQVNEMEIFENLVPSKDIEGRHPYNLGMLAYGEEFFAPCTAEAVVRIMENEIGIPGKNVVIVGRSNTVGKPLAIMLLRRDRSATVTVCHTKTRNLSSITKGADVVVAAAGRPGLITVDMVEKDSIIIDVGINVTDEGIIGDVSKDVANFAKVTPVPGGVGKITTILLMEHLVKSAEKMNF.

Residues 154–156 (GRS), Thr181, and Ile222 contribute to the NADP(+) site.

The protein belongs to the tetrahydrofolate dehydrogenase/cyclohydrolase family. As to quaternary structure, homodimer.

The catalysed reaction is (6R)-5,10-methylene-5,6,7,8-tetrahydrofolate + NADP(+) = (6R)-5,10-methenyltetrahydrofolate + NADPH. The enzyme catalyses (6R)-5,10-methenyltetrahydrofolate + H2O = (6R)-10-formyltetrahydrofolate + H(+). It functions in the pathway one-carbon metabolism; tetrahydrofolate interconversion. In terms of biological role, catalyzes the oxidation of 5,10-methylenetetrahydrofolate to 5,10-methenyltetrahydrofolate and then the hydrolysis of 5,10-methenyltetrahydrofolate to 10-formyltetrahydrofolate. The sequence is that of Bifunctional protein FolD from Thermosipho melanesiensis (strain DSM 12029 / CIP 104789 / BI429).